Reading from the N-terminus, the 143-residue chain is Regulator of ribonuclease activity B (143 aa).

The interval 113 to 143 is disordered; it reads EDPNAEEDEYGDDGEFFDDEDEADFNNAKVH. Residues 115–136 show a composition bias toward acidic residues; it reads PNAEEDEYGDDGEFFDDEDEAD.

Belongs to the RraB family. In terms of assembly, interacts with the C-terminal region of Rne.

It is found in the cytoplasm. Its function is as follows. Globally modulates RNA abundance by binding to RNase E (Rne) and regulating its endonucleolytic activity. Can modulate Rne action in a substrate-dependent manner by altering the composition of the degradosome. This is Regulator of ribonuclease activity B from Haemophilus ducreyi (strain 35000HP / ATCC 700724).